Reading from the N-terminus, the 323-residue chain is tRNA U34 carboxymethyltransferase (323 aa).

Residues Lys91, Trp105, Lys110, Gly130, 180-181 (IE), Met196, Tyr200, and Arg315 contribute to the carboxy-S-adenosyl-L-methionine site.

This sequence belongs to the class I-like SAM-binding methyltransferase superfamily. CmoB family. Homotetramer.

The catalysed reaction is carboxy-S-adenosyl-L-methionine + 5-hydroxyuridine(34) in tRNA = 5-carboxymethoxyuridine(34) in tRNA + S-adenosyl-L-homocysteine + H(+). Functionally, catalyzes carboxymethyl transfer from carboxy-S-adenosyl-L-methionine (Cx-SAM) to 5-hydroxyuridine (ho5U) to form 5-carboxymethoxyuridine (cmo5U) at position 34 in tRNAs. The chain is tRNA U34 carboxymethyltransferase from Citrifermentans bemidjiense (strain ATCC BAA-1014 / DSM 16622 / JCM 12645 / Bem) (Geobacter bemidjiensis).